Here is a 327-residue protein sequence, read N- to C-terminus: Olfactory receptor 9G4 (327 aa).

Topologically, residues 1–43 are extracellular; that stretch reads MIFPSHDSQAFTSVDMEVGNCTILTEFILLGFSADSQWQPILF. N20 is a glycosylation site (N-linked (GlcNAc...) asparagine). Residues 44 to 64 form a helical membrane-spanning segment; that stretch reads GVFLMLYLITLSGNMTLVILI. The Cytoplasmic segment spans residues 65 to 71; that stretch reads RTDSHLH. The helical transmembrane segment at 72-92 threads the bilayer; that stretch reads TPMYFFIGNLSFLDFWYTSVY. The Extracellular portion of the chain corresponds to 93–113; it reads TPKILASCVSEDKRISLAGCG. A disulfide bridge links C112 with C194. A helical transmembrane segment spans residues 114-134; the sequence is AQLFFSCVVAYTECYLLAAMA. At 135 to 152 the chain is on the cytoplasmic side; the sequence is YDRHAAICNPLLYSGTMS. The helical transmembrane segment at 153–173 threads the bilayer; sequence TALCTGLVAGSYIGGFLNAIA. At 174 to 212 the chain is on the extracellular side; the sequence is HTANTFRLHFCGKNIIDHFFCDAPPLVKMSCTNTRVYEK. A helical transmembrane segment spans residues 213 to 233; that stretch reads VLLGVVGFTVLSSILAILISY. Over 234 to 252 the chain is Cytoplasmic; that stretch reads VNILLAILRIHSASGRHKA. A helical membrane pass occupies residues 253–273; that stretch reads FSTCASHLISVMLFYGSLLFM. The Extracellular portion of the chain corresponds to 274-286; that stretch reads YSRPSSTYSLERD. Residues 287 to 307 form a helical membrane-spanning segment; that stretch reads KVAALFYTVINPLLNPLIYSL. At 308–327 the chain is on the cytoplasmic side; it reads RNKDIKEAFRKATQTIQPQT.

Belongs to the G-protein coupled receptor 1 family.

It localises to the cell membrane. Its function is as follows. Odorant receptor. The chain is Olfactory receptor 9G4 (OR9G4) from Homo sapiens (Human).